The following is a 454-amino-acid chain: MRYLPHTPEEISEMLQAVGLSSLEELYSAIPKEARLTRPLSMEPSLDEASLMRHLEELAQKNRAGRMLSFLGAGAYEHHFPPAADQLLLRSEFYTAYTPYQPEVSQGTLQVIFEFQTIVSEILGLPIANASMYDGASALAEAVLMARRLTGRERTVLSGGVHPDYIGTVETYVHGIGAGKASLVGVDVGRDGTADVEALTRAIDETTACVVVGYPNFFGVVGDIRKVAEVCHQKGALLITVTLDPYALALLESPGALGADIAVAEGQPLGLPPQYGGPNVGLFACRNDRKYLQQVPGRLVGETVDKHGTRGYVLTLATREQHIRRERATSNICTNSGLCATAVTMRMCMLGKRGFVEAAKQCLAKAEHLKREIARLEGYSLPMSAPTFHEFVVKVRGGDAGKLTRALAEQGIIAGLDLGRIDARRRDELLVAVTERHSRADLDRLVAGLAGFTP.

This sequence belongs to the GcvP family. N-terminal subunit subfamily. As to quaternary structure, the glycine cleavage system is composed of four proteins: P, T, L and H. In this organism, the P 'protein' is a heterodimer of two subunits.

It carries out the reaction N(6)-[(R)-lipoyl]-L-lysyl-[glycine-cleavage complex H protein] + glycine + H(+) = N(6)-[(R)-S(8)-aminomethyldihydrolipoyl]-L-lysyl-[glycine-cleavage complex H protein] + CO2. In terms of biological role, the glycine cleavage system catalyzes the degradation of glycine. The P protein binds the alpha-amino group of glycine through its pyridoxal phosphate cofactor; CO(2) is released and the remaining methylamine moiety is then transferred to the lipoamide cofactor of the H protein. This Sorangium cellulosum (strain So ce56) (Polyangium cellulosum (strain So ce56)) protein is Probable glycine dehydrogenase (decarboxylating) subunit 1.